The chain runs to 331 residues: NAD-dependent protein deacetylase HST2 (331 aa).

Positions 1 to 262 (MPSLDDILKP…EKLCTLLGLD (262 aa)) constitute a Deacetylase sirtuin-type domain. Residues 26 to 46 (GAGISTGAGIPDFRSPDTGLY) and 109 to 112 (QNID) each bind NAD(+). Residue H129 is the Proton acceptor of the active site. Positions 137, 140, 161, and 164 each coordinate Zn(2+). Residues 201-203 (GTS), 226-228 (NKE), and C248 each bind NAD(+). A coiled-coil region spans residues 276 to 331 (YSKAETKETKMHEIEDKLKEEAHLKEDKHTTKVDKKEKQNDANDKELEQLIDKLKI). Residues 283–319 (ETKMHEIEDKLKEEAHLKEDKHTTKVDKKEKQNDAND) are disordered.

The protein belongs to the sirtuin family. Class I subfamily. Requires Zn(2+) as cofactor.

The protein localises to the cytoplasm. Its subcellular location is the nucleus. The catalysed reaction is N(6)-acetyl-L-lysyl-[protein] + NAD(+) + H2O = 2''-O-acetyl-ADP-D-ribose + nicotinamide + L-lysyl-[protein]. Functionally, NAD-dependent histone deacetylase that is involved in nuclear silencing events. Derepresses subtelomeric silencing and increases repression in nucleolar (rDNA) silencing. Its function is negatively regulated by active nuclear export. The chain is NAD-dependent protein deacetylase HST2 (HST2) from Candida albicans (strain SC5314 / ATCC MYA-2876) (Yeast).